A 403-amino-acid polypeptide reads, in one-letter code: Phosphopentomutase (403 aa).

Residues Asp-13, Asp-298, His-303, Asp-339, His-340, and His-351 each coordinate Mn(2+).

The protein belongs to the phosphopentomutase family. Mn(2+) serves as cofactor.

It is found in the cytoplasm. The enzyme catalyses 2-deoxy-alpha-D-ribose 1-phosphate = 2-deoxy-D-ribose 5-phosphate. The catalysed reaction is alpha-D-ribose 1-phosphate = D-ribose 5-phosphate. The protein operates within carbohydrate degradation; 2-deoxy-D-ribose 1-phosphate degradation; D-glyceraldehyde 3-phosphate and acetaldehyde from 2-deoxy-alpha-D-ribose 1-phosphate: step 1/2. In terms of biological role, isomerase that catalyzes the conversion of deoxy-ribose 1-phosphate (dRib-1-P) and ribose 1-phosphate (Rib-1-P) to deoxy-ribose 5-phosphate (dRib-5-P) and ribose 5-phosphate (Rib-5-P), respectively. This is Phosphopentomutase from Streptococcus mutans serotype c (strain ATCC 700610 / UA159).